The sequence spans 376 residues: WD repeat-containing protein wdr-5.1 (376 aa).

A compositionally biased stretch (polar residues) spans Met1–Val24. Positions Met1–Ser70 are disordered. Positions Pro25–Pro53 are enriched in low complexity. WD repeat units follow at residues Gly85–Asn115, Gly127–Glu157, Gly169–Asp199, Ala211–Asp241, Asp254–Asp284, Gly296–Asn329, and Gly341–Arg373.

The protein belongs to the WD repeat WDR5/wds family. In terms of assembly, component of the SET2 complex (also known as the SET1/COMPASS complex), which contains at least set-2, swd-2.1, cfp-1, rbbp-5, wdr-5.1, dpy-30 and ash-2. Within the complex, interacts with cfp-1, ash-2, dpy-30 and hda-1. Interacts with histone H3 both unmethylated and methylated at 'Lys-4'. Interacts with jmjd-3.1, ceh-6, sox-2, sem-4 and egl-27. Interacts with set-2. In terms of tissue distribution, enriched in the germline. Detected in all nuclei of the embryo. In larvae, expression is detected in the nuclei of seam cells, somatic gonad precursor cells Z1 and Z4, vulval precursor cells, distal tip cells, hypodermal cells, intestinal and muscle cells. Also detected in the neurons from the ventral nerve cord, head and tail region. Expressed in the head and tail region, intestinal cells, muscle cells, cells of the vulva, spermatheca and sheath cells in adults.

Its subcellular location is the nucleus. In terms of biological role, contributes to histone modification. May position the N-terminus of histone H3 for efficient trimethylation at 'Lys-4'. Required for di- and trimethylation, particularly for the trimethylation at 'Lys-4' of histone H3. Not required for demethylation of histone H3 'Lys-27'. H3 'Lys-4' methylation represents a specific tag for epigenetic transcriptional activation, germline establishment, maintenance and function. Implicated in the epigenetic inheritance of lifespan over several generations. Acts in the germline to limit the longevity of the soma, probably by regulating a lipid metabolism pathway that signals from the germline to the intestine, thereby preventing accumulation of mono-unsaturated fatty acids. Required for RNA interference with probable antagonistic role against hpl-2 function. Plays a role in vulval cell fate specification by acting in the synthetic multivulva pathway independent of set-2. Sex determining protein required in the germline to promote the spermatogenesis to oogenesis switch during the late larval stages of development. Acts with the sex determining factor tra-1, and redundantly with wdr-5.2, to regulate fog-3 expression, which in turn determines germ cell fate. Cooperates with jmjd-3.1, egl-27 and unc-3 to ensure robust transdifferentiation of the Y rectal cell to the PDA motor neuron during larval development. In Caenorhabditis elegans, this protein is WD repeat-containing protein wdr-5.1 (wdr-5.1).